The following is a 280-amino-acid chain: Ribosomal RNA small subunit methyltransferase A (280 aa).

6 residues coordinate S-adenosyl-L-methionine: H13, L15, G40, E61, D85, and N105.

It belongs to the class I-like SAM-binding methyltransferase superfamily. rRNA adenine N(6)-methyltransferase family. RsmA subfamily.

The protein localises to the cytoplasm. It carries out the reaction adenosine(1518)/adenosine(1519) in 16S rRNA + 4 S-adenosyl-L-methionine = N(6)-dimethyladenosine(1518)/N(6)-dimethyladenosine(1519) in 16S rRNA + 4 S-adenosyl-L-homocysteine + 4 H(+). In terms of biological role, specifically dimethylates two adjacent adenosines (A1518 and A1519) in the loop of a conserved hairpin near the 3'-end of 16S rRNA in the 30S particle. May play a critical role in biogenesis of 30S subunits. This Phocaeicola vulgatus (strain ATCC 8482 / DSM 1447 / JCM 5826 / CCUG 4940 / NBRC 14291 / NCTC 11154) (Bacteroides vulgatus) protein is Ribosomal RNA small subunit methyltransferase A.